Consider the following 332-residue polypeptide: Divalent cation transporter CmaX (332 aa).

The Cytoplasmic segment spans residues 1-277 (MQAYESGDER…MNRTMYLLGI (277 aa)). The chain crosses the membrane as a helical span at residues 278-286 (ITGFFLPMS). Residues 287 to 307 (FVTGLLGINVGGIPGADAPHG) lie on the Periplasmic side of the membrane. The chain crosses the membrane as a helical span at residues 308–323 (FWLACLLIGGVATFQW). The Cytoplasmic segment spans residues 324–332 (WVFRRLRWL).

The protein belongs to the CorA metal ion transporter (MIT) (TC 1.A.35) family. In terms of assembly, homopentamer.

It is found in the cell inner membrane. The catalysed reaction is Zn(2+)(in) = Zn(2+)(out). It carries out the reaction Cd(2+)(in) = Cd(2+)(out). It catalyses the reaction Ni(2+)(in) = Ni(2+)(out). The enzyme catalyses Co(2+)(in) = Co(2+)(out). Functionally, transports divalent cations including Zn(2+), Cd(2+), Ni(2+) and Co(2+). The proton gradient has a small influence on transport suggesting that the transport is probably not proton-dependent. This chain is Divalent cation transporter CmaX, found in Pseudomonas aeruginosa (strain ATCC 15692 / DSM 22644 / CIP 104116 / JCM 14847 / LMG 12228 / 1C / PRS 101 / PAO1).